Reading from the N-terminus, the 199-residue chain is MAKYTRLRYDVTEVPLADLVREVMGEEDLEGLAASDRVATRETDQSTPYHRRFYDNVDVISPVYRTLVHRLLGDEVDAVYIQRIPTFRVHLRNSVAVGSWHRDRDFGHDPSEVNYWVPLTRAYGNNTLWIDEEPVHAEYGEVIVFDGANSWHGNVVNDTETSRVSMDFRTLPRSSYEPNDRKSISYGLPFRLGEYWDTV.

The protein operates within antibiotic biosynthesis; streptomycin biosynthesis. In terms of biological role, may be involved in the formation of N-methyl-L-glucosamine. In Streptomyces griseus, this protein is Streptomycin biosynthesis protein StrG (strG).